A 389-amino-acid polypeptide reads, in one-letter code: Phosphoglycerate kinase (389 aa).

Residues 19 to 21, Arg34, 57 to 60, Arg117, and Arg150 each bind substrate; these read DYN and HLGR. ATP contacts are provided by residues Lys200, Gly288, Glu319, and 347 to 350; that span reads GGDS.

Belongs to the phosphoglycerate kinase family. In terms of assembly, monomer.

Its subcellular location is the cytoplasm. It catalyses the reaction (2R)-3-phosphoglycerate + ATP = (2R)-3-phospho-glyceroyl phosphate + ADP. It functions in the pathway carbohydrate degradation; glycolysis; pyruvate from D-glyceraldehyde 3-phosphate: step 2/5. The polypeptide is Phosphoglycerate kinase (Deinococcus geothermalis (strain DSM 11300 / CIP 105573 / AG-3a)).